A 1386-amino-acid polypeptide reads, in one-letter code: DNA-directed RNA polymerase subunit beta'' (1386 aa).

Zn(2+)-binding residues include C224, C294, C301, and C304.

It belongs to the RNA polymerase beta' chain family. RpoC2 subfamily. As to quaternary structure, in plastids the minimal PEP RNA polymerase catalytic core is composed of four subunits: alpha, beta, beta', and beta''. When a (nuclear-encoded) sigma factor is associated with the core the holoenzyme is formed, which can initiate transcription. It depends on Zn(2+) as a cofactor.

It localises to the plastid. Its subcellular location is the chloroplast. The enzyme catalyses RNA(n) + a ribonucleoside 5'-triphosphate = RNA(n+1) + diphosphate. DNA-dependent RNA polymerase catalyzes the transcription of DNA into RNA using the four ribonucleoside triphosphates as substrates. In Acorus calamus (Sweet flag), this protein is DNA-directed RNA polymerase subunit beta''.